Reading from the N-terminus, the 339-residue chain is UDP-N-acetylglucosamine--N-acetylmuramyl-(pentapeptide) pyrophosphoryl-undecaprenol N-acetylglucosamine transferase (339 aa).

Residues 10–12 (TGG), Asn-124, Arg-168, Ser-188, Ile-235, and Gln-280 contribute to the UDP-N-acetyl-alpha-D-glucosamine site.

The protein belongs to the glycosyltransferase 28 family. MurG subfamily.

It localises to the cell inner membrane. It catalyses the reaction di-trans,octa-cis-undecaprenyl diphospho-N-acetyl-alpha-D-muramoyl-L-alanyl-D-glutamyl-meso-2,6-diaminopimeloyl-D-alanyl-D-alanine + UDP-N-acetyl-alpha-D-glucosamine = di-trans,octa-cis-undecaprenyl diphospho-[N-acetyl-alpha-D-glucosaminyl-(1-&gt;4)]-N-acetyl-alpha-D-muramoyl-L-alanyl-D-glutamyl-meso-2,6-diaminopimeloyl-D-alanyl-D-alanine + UDP + H(+). It functions in the pathway cell wall biogenesis; peptidoglycan biosynthesis. Functionally, cell wall formation. Catalyzes the transfer of a GlcNAc subunit on undecaprenyl-pyrophosphoryl-MurNAc-pentapeptide (lipid intermediate I) to form undecaprenyl-pyrophosphoryl-MurNAc-(pentapeptide)GlcNAc (lipid intermediate II). The sequence is that of UDP-N-acetylglucosamine--N-acetylmuramyl-(pentapeptide) pyrophosphoryl-undecaprenol N-acetylglucosamine transferase from Pseudothermotoga lettingae (strain ATCC BAA-301 / DSM 14385 / NBRC 107922 / TMO) (Thermotoga lettingae).